A 416-amino-acid chain; its full sequence is Chromate transport protein (416 aa).

The segment at M1–A21 is disordered. The next 11 helical transmembrane spans lie at L99 to L119, F128 to I148, L160 to I177, D181 to L198, A204 to P224, A237 to A257, L283 to V303, I308 to F328, L341 to I361, V371 to W391, and L395 to Q415.

Belongs to the chromate ion transporter (CHR) (TC 2.A.51) family.

It localises to the cell inner membrane. This protein reduces chromate accumulation and is essential for chromate resistance. The polypeptide is Chromate transport protein (Pseudomonas aeruginosa).